The chain runs to 120 residues: UPF0102 protein PST_1070 (120 aa).

It belongs to the UPF0102 family.

The polypeptide is UPF0102 protein PST_1070 (Stutzerimonas stutzeri (strain A1501) (Pseudomonas stutzeri)).